The sequence spans 1960 residues: Transcription factor 20 (1960 aa).

Residues 1–18 (MQSFREQSSYHGNQQSYP) show a composition bias toward polar residues. The segment at 1-287 (MQSFREQSSY…GSNAQAYGTQ (287 aa)) is disordered. The segment covering 42 to 60 (GGTGGSSGSSGSGSGGGRR) has biased composition (gly residues). Arginine 60 is modified (omega-N-methylarginine). A compositionally biased stretch (low complexity) spans 61–75 (GAAAAAAAMASETSG). Over residues 122–131 (QGSSFGNQYG) the composition is skewed to polar residues. Positions 164-192 (SAQYQQQASSQQQQQQVQQLRQQLYQSHQ) are enriched in low complexity. The span at 193-219 (PLPQATGQPASSSSHLQPMQRPSTLPS) shows a compositional bias: polar residues. Low complexity predominate over residues 236-259 (QSSASSSSSSSFPSPQRFSQSGQS). Polar residues-rich tracts occupy residues 260-270 (YDGSYNVNAGS) and 277-287 (VGSNAQAYGTQ). Lysine 304 participates in a covalent cross-link: Glycyl lysine isopeptide (Lys-Gly) (interchain with G-Cter in SUMO2). Disordered stretches follow at residues 305–328 (IPQGTQQGQQQQQPQQQQHPSQHV) and 360–392 (FHQNFSPISNPSPAASVVQSPSCSSTPSPLMQT). 2 stretches are compositionally biased toward low complexity: residues 306 to 322 (PQGTQQGQQQQQPQQQQ) and 368 to 388 (SNPSPAASVVQSPSCSSTPSP). Phosphoserine occurs at positions 419 and 430. Residues 476–748 (SDALTPQKKT…HGERKGRNEK (273 aa)) form a disordered region. 2 stretches are compositionally biased toward polar residues: residues 497–508 (SCTNSEGSSQPE) and 537–547 (LSGQSTSSDTT). 4 positions are modified to phosphoserine: serine 538, serine 559, serine 574, and serine 583. The residue at position 602 (lysine 602) is an N6-acetyllysine. Basic and acidic residues predominate over residues 616–628 (RVEKPGGQDKGSQ). Serine 640 bears the Phosphoserine mark. Positions 665 to 677 (GNKNGDNNSNHNG) are enriched in low complexity. The span at 693-702 (TSRTEPSKSP) shows a compositional bias: polar residues. Residues lysine 710, lysine 733, lysine 748, lysine 823, lysine 832, and lysine 844 each participate in a glycyl lysine isopeptide (Lys-Gly) (interchain with G-Cter in SUMO2) cross-link. Over residues 732–748 (EKGDFTGHGERKGRNEK) the composition is skewed to basic and acidic residues. Residue serine 871 is modified to Phosphoserine. Glycyl lysine isopeptide (Lys-Gly) (interchain with G-Cter in SUMO2) cross-links involve residues lysine 920 and lysine 922. Residues 920–1037 (KLKSQSGQIK…GDPHHMNPHM (118 aa)) form a disordered region. Lysine 929 is covalently cross-linked (Glycyl lysine isopeptide (Lys-Gly) (interchain with G-Cter in SUMO1); alternate). Lysine 929 participates in a covalent cross-link: Glycyl lysine isopeptide (Lys-Gly) (interchain with G-Cter in SUMO2); alternate. Residues 936-945 (SKSQASFNNK) are compositionally biased toward polar residues. The segment covering 946 to 961 (KSGDHCHPPSIKHESY) has biased composition (basic and acidic residues). A Glycyl lysine isopeptide (Lys-Gly) (interchain with G-Cter in SUMO2) cross-link involves residue lysine 957. Phosphoserine occurs at positions 966 and 1005. A Glycyl lysine isopeptide (Lys-Gly) (interchain with G-Cter in SUMO2) cross-link involves residue lysine 1015. Omega-N-methylarginine is present on arginine 1024. Position 1053 is a phosphoserine (serine 1053). Residues lysine 1086, lysine 1098, lysine 1137, lysine 1173, lysine 1178, lysine 1183, lysine 1210, lysine 1231, lysine 1267, and lysine 1274 each participate in a glycyl lysine isopeptide (Lys-Gly) (interchain with G-Cter in SUMO2) cross-link. Disordered stretches follow at residues 1110–1142 (AAAQHRQEGPRKSPRQQQFLDRVRSPLKNDKDG), 1162–1285 (RCLM…GRLL), and 1303–1331 (SHSQDIKSIPKRDSSKDLPSPDSRNCPAV). Residues 1130-1142 (DRVRSPLKNDKDG) show a composition bias toward basic and acidic residues. Residues 1170 to 1191 (LPNKGMELKHGSQKLQESCWDL) form a leucine-zipper region. The short motif at 1254-1268 (RRRVRSFISPIPSKR) is the Nuclear localization signal element. A compositionally biased stretch (basic and acidic residues) spans 1304 to 1318 (HSQDIKSIPKRDSSK). A Phosphoserine modification is found at serine 1305. A Glycyl lysine isopeptide (Lys-Gly) (interchain with G-Cter in SUMO2) cross-link involves residue lysine 1309. Serine 1335 carries the phosphoserine modification. Lysine 1338 participates in a covalent cross-link: Glycyl lysine isopeptide (Lys-Gly) (interchain with G-Cter in SUMO2). Phosphoserine is present on serine 1361. The tract at residues 1384–1607 (DILSLKSGPP…TKQAVPIVEP (224 aa)) is disordered. Residues lysine 1389, lysine 1409, lysine 1428, and lysine 1446 each participate in a glycyl lysine isopeptide (Lys-Gly) (interchain with G-Cter in SUMO2) cross-link. Positions 1424–1451 (LHVEKPLPRSSEEWRGSVDDKVKTETHA) are enriched in basic and acidic residues. The segment covering 1464–1477 (MTSTTSQKPGSNQG) has biased composition (polar residues). Residue lysine 1510 forms a Glycyl lysine isopeptide (Lys-Gly) (interchain with G-Cter in SUMO2) linkage. The residue at position 1522 (serine 1522) is a Phosphoserine. Lysine 1524 participates in a covalent cross-link: Glycyl lysine isopeptide (Lys-Gly) (interchain with G-Cter in SUMO2). A DNA-binding region (a.T hook) is located at residues 1537–1551 (GKKKGRPIGSVNKQK). The span at 1555 to 1566 (QPPPPPPQPPQI) shows a compositional bias: pro residues. The Nuclear localization signal motif lies at 1576 to 1600 (KPKKQRQRRERRKPGAQPRKRKTKQ). Residues 1578 to 1599 (KKQRQRRERRKPGAQPRKRKTK) are compositionally biased toward basic residues. Lysine 1613 participates in a covalent cross-link: Glycyl lysine isopeptide (Lys-Gly) (interchain with G-Cter in SUMO2). 2 disordered regions span residues 1660–1683 (LVRGRKGQRSLTPPPSSTESKALP) and 1732–1839 (TLPK…PELE). Serine 1669 bears the Phosphoserine mark. 3 positions are modified to phosphothreonine: threonine 1671, threonine 1762, and threonine 1764. The short motif at 1785 to 1792 (RFKRRHRS) is the Nuclear localization signal element. The C2HC pre-PHD-type; degenerate zinc-finger motif lies at 1829-1865 (PTTSEGGPELELQIPELPLDSNEFWVHEGCILWANGI). The segment at 1885 to 1933 (MKCSHCQEAGATLGCYNKGCSFRYHYPCAIDADCLLHEENFSVRCPKHK) adopts a PHD-type zinc-finger fold. A disordered region spans residues 1939 to 1960 (PLPPLQNKTAKGSLSTEQSERG). The span at 1944–1960 (QNKTAKGSLSTEQSERG) shows a compositional bias: polar residues.

As to quaternary structure, homodimer. Interacts with RNF4 and JUN. In terms of tissue distribution, expressed in most tissues, except in ovary and prostate. Isoform 1 is exclusively expressed in brain, heart and testis, and this form predominates in liver and kidney. Isoform 2 predominates in lung.

The protein resides in the nucleus. Transcriptional activator that binds to the regulatory region of MMP3 and thereby controls stromelysin expression. It stimulates the activity of various transcriptional activators such as JUN, SP1, PAX6 and ETS1, suggesting a function as a coactivator. This chain is Transcription factor 20 (TCF20), found in Homo sapiens (Human).